The chain runs to 366 residues: tRNA/tmRNA (uracil-C(5))-methyltransferase (366 aa).

Residues Q190, Y218, N223, E239, and D299 each contribute to the S-adenosyl-L-methionine site. Catalysis depends on C324, which acts as the Nucleophile. E358 serves as the catalytic Proton acceptor.

This sequence belongs to the class I-like SAM-binding methyltransferase superfamily. RNA M5U methyltransferase family. TrmA subfamily.

It catalyses the reaction uridine(54) in tRNA + S-adenosyl-L-methionine = 5-methyluridine(54) in tRNA + S-adenosyl-L-homocysteine + H(+). It carries out the reaction uridine(341) in tmRNA + S-adenosyl-L-methionine = 5-methyluridine(341) in tmRNA + S-adenosyl-L-homocysteine + H(+). In terms of biological role, dual-specificity methyltransferase that catalyzes the formation of 5-methyluridine at position 54 (m5U54) in all tRNAs, and that of position 341 (m5U341) in tmRNA (transfer-mRNA). The sequence is that of tRNA/tmRNA (uracil-C(5))-methyltransferase from Escherichia coli O6:H1 (strain CFT073 / ATCC 700928 / UPEC).